A 584-amino-acid polypeptide reads, in one-letter code: FAD-linked oxidoreductase OXR2 (584 aa).

A signal peptide spans 1-22 (MRSIISAFILSLNFCTQPLVRG). Residues Asn75, Asn97, Asn115, Asn225, Asn302, Asn321, and Asn507 are each glycosylated (N-linked (GlcNAc...) asparagine). Positions 128–310 (LGMLSEKYIA…LNATFKVEPV (183 aa)) constitute an FAD-binding PCMH-type domain.

This sequence belongs to the oxygen-dependent FAD-linked oxidoreductase family. FAD is required as a cofactor.

The protein operates within secondary metabolite biosynthesis. FAD-linked oxidoreductase; part of the gene cluster that mediates the biosynthesis of a tyrosine-derived cytochalasan acting as a fungal signal recognized by resistant rice plants and leads to avirulence in Pi33 resistant rice cultivars. The first step in the pathway is catalyzed by the hybrid PKS-NRPS ACE1, assisted by the enoyl reductase RAP1, that are responsible for fusion of the tyrosine precursor and the polyketide backbone. The polyketide synthase module (PKS) of ACE1 is responsible for the synthesis of the polyketide backbone and the downstream nonribosomal peptide synthetase (NRPS) amidates the carboxyl end of the polyketide with the tyrosine precursor. Because ACE1 lacks a designated enoylreductase (ER) domain, the required activity is provided the enoyl reductase RAP1. Reduction by the hydrolyase ORFZ, followed by dehydration and intra-molecular Diels-Alder cyclization by the Diels-Alderase ORF3 then yield the required isoindolone-fused macrocycle. A number of oxidative steps catalyzed by the tailoring enzymes identified within the cluster, including cytochrome P450 monooxygenases CYP1 to CYP4, the FAD-linked oxidoreductase OXR2 and the short-chain dehydrogenase/reductase OXR1, are further required to afford the final cytochalasans that confer avirulence and which have still to be identified. The monooxygenase CYP1 has been shown to be a site-selective C-18 hydroxylase whereas the function of CYP3 is the site-selective epoxidation of the C-6/C-7 olefin that is present in some intermediate compounds. Finally, SYN2 and RAP2 are not required for avirulence in Pi33 resistant rice cultivars. The sequence is that of FAD-linked oxidoreductase OXR2 from Pyricularia oryzae (strain 70-15 / ATCC MYA-4617 / FGSC 8958) (Rice blast fungus).